The following is a 394-amino-acid chain: F-box protein At2g17830 (394 aa).

The 47-residue stretch at 1-47 (MAIMSDLPRDLLAEILSRVPLASLRSVRFTCKKWNDLSKDRSFLKKQ) folds into the F-box domain.

This Arabidopsis thaliana (Mouse-ear cress) protein is F-box protein At2g17830.